Reading from the N-terminus, the 734-residue chain is Origin of replication complex subunit 3 (734 aa).

Disordered stretches follow at residues 1–25 (MAPS…SDTA) and 532–554 (GQRQ…KLEK). Residues 12–24 (QCSTTDSFNSSDT) show a composition bias toward polar residues.

This sequence belongs to the ORC3 family. As to quaternary structure, component of the origin recognition complex (ORC) composed of at least ORC1 (ORC1A or ORC1B), ORC2, ORC3, ORC4, ORC5 and ORC6. ORC is regulated in a cell-cycle and development dependent manner. It is sequentially assembled at the exit from anaphase of mitosis and disassembled as cells enter S phase. Interacts directly with ORC1A, ORC2, ORC4, ORC5 and ORC6. Follow a cell-cycle regulation with a peak at the G1/S-phase. Mostly expressed in siliques and flowers, and, to a lower exent, in flower buds, leaves, roots and stems.

The protein localises to the nucleus. In terms of biological role, component of the origin recognition complex (ORC) that binds origins of replication. DNA-binding is ATP-dependent. The specific DNA sequences that define origins of replication have not been identified yet. The polypeptide is Origin of replication complex subunit 3 (Arabidopsis thaliana (Mouse-ear cress)).